The following is a 297-amino-acid chain: Phosphatidylglycerol--prolipoprotein diacylglyceryl transferase (297 aa).

Helical transmembrane passes span 20-40 (FLTIRWYGLLISISVVIGLFI), 58-78 (ILPSLIISSIIGARAYYVIFE), 104-124 (IAIWQGGIAIHGGLIGGFLCI), and 133-153 (IHLKTFIDILIPSIILGQSIG). Arginine 154 serves as a coordination point for a 1,2-diacyl-sn-glycero-3-phospho-(1'-sn-glycerol). The next 3 helical transmembrane spans lie at 194 to 214 (TFIYESLWNFLIFILLITIFY), 225 to 245 (GFISCLYLIGYSFGRFWIEGL), and 266 to 286 (AQFISIFLFSSGLIGLFFLRL).

It belongs to the Lgt family.

Its subcellular location is the cell inner membrane. The enzyme catalyses L-cysteinyl-[prolipoprotein] + a 1,2-diacyl-sn-glycero-3-phospho-(1'-sn-glycerol) = an S-1,2-diacyl-sn-glyceryl-L-cysteinyl-[prolipoprotein] + sn-glycerol 1-phosphate + H(+). The protein operates within protein modification; lipoprotein biosynthesis (diacylglyceryl transfer). Catalyzes the transfer of the diacylglyceryl group from phosphatidylglycerol to the sulfhydryl group of the N-terminal cysteine of a prolipoprotein, the first step in the formation of mature lipoproteins. The sequence is that of Phosphatidylglycerol--prolipoprotein diacylglyceryl transferase from Prochlorococcus marinus subsp. pastoris (strain CCMP1986 / NIES-2087 / MED4).